The primary structure comprises 282 residues: Glutamate--LysW ligase ArgX (282 aa).

ATP-binding positions include lysine 87, lysine 127, glycine 131–valine 137, and glutamine 167–arginine 178. One can recognise an ATP-grasp domain in the interval tyrosine 91–lysine 277. Arginine 192 is a substrate binding site. Asparagine 202 is a binding site for ATP. Valine 203 to alanine 204 serves as a coordination point for substrate. The Mg(2+) site is built by aspartate 237, glutamate 250, and asparagine 252. Residue glutamate 256–phenylalanine 260 coordinates substrate. Positions glycine 259 to phenylalanine 260 match the GF motif that is essential for ArgX substrate specificity motif.

The protein belongs to the RimK family. LysX subfamily. Homotetramer. Interacts with LysW. It depends on Mg(2+) as a cofactor.

It catalyses the reaction [amino-group carrier protein]-C-terminal-L-glutamate + L-glutamate + ATP = [amino-group carrier protein]-C-terminal-gamma-(L-glutamyl)-L-glutamate + ADP + phosphate + H(+). The protein operates within amino-acid biosynthesis; L-arginine biosynthesis. In terms of biological role, catalyzes the ATP-dependent formation of a covalent bond between the amino group of glutamate and the gamma-carboxyl group of the C-terminal glutamate residue in LysW. The sequence is that of Glutamate--LysW ligase ArgX from Sulfurisphaera tokodaii (strain DSM 16993 / JCM 10545 / NBRC 100140 / 7) (Sulfolobus tokodaii).